Consider the following 102-residue polypeptide: Cytochrome c3 (102 aa).

Positions 26, 29, 34, 37, 38, 39, 50, 55, 56, 73, 81, 84, 85, 95, 98, and 99 each coordinate heme c.

Heme is required as a cofactor.

It is found in the periplasm. Its function is as follows. Participates in sulfate respiration coupled with phosphorylation by transferring electrons from the enzyme dehydrogenase to ferredoxin. This chain is Cytochrome c3, found in Desulfovibrio desulfuricans.